The chain runs to 365 residues: N-acetylgalactosamine-N,N'-diacetylbacillosaminyl-diphospho-undecaprenol 4-alpha-N-acetylgalactosaminyltransferase (365 aa).

It belongs to the glycosyltransferase group 1 family.

It localises to the cell inner membrane. The catalysed reaction is N-acetyl-alpha-D-galactosaminyl-(1-&gt;3)-N,N'-diacetyl-alpha-D-bacillosaminyl-tri-trans,hepta-cis-undecaprenyl diphosphate + UDP-N-acetyl-alpha-D-galactosamine = N-acetyl-alpha-D-galactosaminyl-(1-&gt;4)-N-acetyl-alpha-D-galactosaminyl-(1-&gt;3)-N,N'-diacetyl-alpha-D-bacillosaminyl-tri-trans,heptacis-undecaprenyl diphosphate + UDP + H(+). It participates in protein modification; protein glycosylation. In terms of biological role, adds a GalNAc residue on to the Und-PP-Bac2,4diNAc-GalNAc disaccharide in the N-linked protein glycosylation pathway. Transfers the third sugar in the heptasaccharide biosynthesis. In Campylobacter jejuni subsp. jejuni serotype O:2 (strain ATCC 700819 / NCTC 11168), this protein is N-acetylgalactosamine-N,N'-diacetylbacillosaminyl-diphospho-undecaprenol 4-alpha-N-acetylgalactosaminyltransferase (pglJ).